Here is a 310-residue protein sequence, read N- to C-terminus: 2-ketogluconate reductase (310 aa).

Residues 151 to 152 (HI) and 227 to 229 (IAR) each bind NADP(+). Catalysis depends on residues R229 and E258. Residue H276 is the Proton donor of the active site.

It belongs to the D-isomer specific 2-hydroxyacid dehydrogenase family. In terms of assembly, homohexamer.

The catalysed reaction is D-gluconate + NADP(+) = 2-dehydro-D-gluconate + NADPH + H(+). Functionally, catalyzes the reduction of 2-keto-D-gluconate to gluconate. Can also catalyze the reduction of 2-keto-L-gulonate. Can use both NADH and NADPH efficiently, with a slight preference for NADPH. The polypeptide is 2-ketogluconate reductase (Gluconobacter oxydans (strain 621H) (Gluconobacter suboxydans)).